The primary structure comprises 260 residues: Hemin import ATP-binding protein HmuV (260 aa).

In terms of domain architecture, ABC transporter spans 2-239 (IRAENITLIR…ETIARVYGIG (238 aa)). 34 to 41 (GPNGAGKS) is a binding site for ATP.

The protein belongs to the ABC transporter superfamily. Heme (hemin) importer (TC 3.A.1.14.5) family. As to quaternary structure, the complex is composed of two ATP-binding proteins (HmuV), two transmembrane proteins (HmuU) and a solute-binding protein (HmuT).

It is found in the cell inner membrane. In terms of biological role, part of the ABC transporter complex HmuTUV involved in hemin import. Responsible for energy coupling to the transport system. The sequence is that of Hemin import ATP-binding protein HmuV from Agrobacterium fabrum (strain C58 / ATCC 33970) (Agrobacterium tumefaciens (strain C58)).